Reading from the N-terminus, the 668-residue chain is Ubiquitin ligase complex F-box protein UFO1 (668 aa).

The 47-residue stretch at 5-51 folds into the F-box domain; it reads GLVLQDLPPEILINIFSHLDEKDLFTLQELSTHFRNLIHDEELWKNL. At Ser-511 the chain carries Phosphoserine. The residue at position 514 (Thr-514) is a Phosphothreonine. 3 UIM domains span residues 547-566, 583-602, and 651-668; these read DEDE…YETQ, EDDE…DERR, and NVDE…SEIN. A compositionally biased stretch (polar residues) spans 564 to 578; sequence ETQTNSSANHGNNTN. Disordered regions lie at residues 564–585 and 599–639; these read ETQT…DEDD and DERR…TENT.

In terms of assembly, interacts with SKP1. Component of the probable SCF(UFO1) complex containing CDC53, SKP1, RBX1 and UFO1.

Its pathway is protein modification; protein ubiquitination. Its function is as follows. Substrate recognition component of a SCF (SKP1-CUL1-F-box protein) E3 ubiquitin-protein ligase complex which mediates the ubiquitination and subsequent proteasomal degradation of target proteins. Probably recognizes and binds to phosphorylated target proteins. This Saccharomyces cerevisiae (strain ATCC 204508 / S288c) (Baker's yeast) protein is Ubiquitin ligase complex F-box protein UFO1 (UFO1).